The following is an 82-amino-acid chain: Putative membrane protein insertion efficiency factor (82 aa).

This sequence belongs to the UPF0161 family.

It localises to the cell inner membrane. In terms of biological role, could be involved in insertion of integral membrane proteins into the membrane. This is Putative membrane protein insertion efficiency factor from Francisella tularensis subsp. holarctica (strain LVS).